The sequence spans 570 residues: Proline--tRNA ligase (570 aa).

Belongs to the class-II aminoacyl-tRNA synthetase family. ProS type 1 subfamily. In terms of assembly, homodimer.

The protein localises to the cytoplasm. It carries out the reaction tRNA(Pro) + L-proline + ATP = L-prolyl-tRNA(Pro) + AMP + diphosphate. Catalyzes the attachment of proline to tRNA(Pro) in a two-step reaction: proline is first activated by ATP to form Pro-AMP and then transferred to the acceptor end of tRNA(Pro). As ProRS can inadvertently accommodate and process non-cognate amino acids such as alanine and cysteine, to avoid such errors it has two additional distinct editing activities against alanine. One activity is designated as 'pretransfer' editing and involves the tRNA(Pro)-independent hydrolysis of activated Ala-AMP. The other activity is designated 'posttransfer' editing and involves deacylation of mischarged Ala-tRNA(Pro). The misacylated Cys-tRNA(Pro) is not edited by ProRS. The polypeptide is Proline--tRNA ligase (Clostridium beijerinckii (strain ATCC 51743 / NCIMB 8052) (Clostridium acetobutylicum)).